The following is a 166-amino-acid chain: Flagellar assembly factor FliW (166 aa).

The protein belongs to the FliW family. In terms of assembly, interacts with translational regulator CsrA and flagellin(s).

It localises to the cytoplasm. Its function is as follows. Acts as an anti-CsrA protein, binds CsrA and prevents it from repressing translation of its target genes, one of which is flagellin. Binds to flagellin and participates in the assembly of the flagellum. The polypeptide is Flagellar assembly factor FliW (Desulfovibrio desulfuricans (strain ATCC 27774 / DSM 6949 / MB)).